The following is a 309-amino-acid chain: MTTTIVLASPNYAANESKFATSLAKFQANSTDASHQRDIHMIDRIAGNLASLTVNAYDRGLLFLDESTTLEEIKAILPKLFAAVHPGAALSVDGVFAKELADAFERESLLAGWMIESKGPFVLRRPAQVEAVPLKLSTKKSAGASVGVKLDFLFKKPEKQNTLSKNDVLKAAQEEEEGEDDLYDEDALVSDEETQLGKDVLAPPSTCSKPGKKKRCKNCTCGQREQDEAEAAAASAAAPKAVKLTDTMEIDFTELLKSKNAVSSCGSCYLGDAFRCSGCPYIGLPAFKPGEQVLISENRDKLSWMADDL.

The tract at residues 1–132 (MTTTIVLASP…LRRPAQVEAV (132 aa)) is N-terminal SAM-like domain. A linker region spans residues 133–195 (PLKLSTKKSA…DALVSDEETQ (63 aa)). Residues Cys207, Cys216, Cys219, and Cys221 each coordinate [2Fe-2S] cluster. A fe-S binding site A region spans residues 207-221 (CSKPGKKKRCKNCTC). 4 residues coordinate [4Fe-4S] cluster: Cys265, Cys268, Cys276, and Cys279. 2 short sequence motifs (cx2C motif) span residues 265–268 (CGSC) and 276–279 (CSGC). The tract at residues 265-279 (CGSCYLGDAFRCSGC) is fe-S binding site B.

The protein belongs to the anamorsin family. In terms of assembly, monomer. Interacts with TAH18. Interacts with MIA40. It depends on [2Fe-2S] cluster as a cofactor. [4Fe-4S] cluster is required as a cofactor.

The protein localises to the cytoplasm. The protein resides in the mitochondrion intermembrane space. Its function is as follows. Component of the cytosolic iron-sulfur (Fe-S) protein assembly (CIA) machinery required for the maturation of extramitochondrial Fe-S proteins. Part of an electron transfer chain functioning in an early step of cytosolic Fe-S biogenesis, facilitating the de novo assembly of a [4Fe-4S] cluster on the scaffold complex CFD1-NBP35. Electrons are transferred to DRE2 from NADPH via the FAD- and FMN-containing protein TAH18. TAH18-DRE2 are also required for the assembly of the diferric tyrosyl radical cofactor of ribonucleotide reductase (RNR), probably by providing electrons for reduction during radical cofactor maturation in the catalytic small subunit RNR2. The protein is Fe-S cluster assembly protein dre2 of Schizosaccharomyces japonicus (strain yFS275 / FY16936) (Fission yeast).